A 233-amino-acid chain; its full sequence is Metallo-beta-lactamase domain-containing protein 1 (233 aa).

Zn(2+) is bound by residues H96, H98, D100, H101, H152, D174, and H213.

It belongs to the metallo-beta-lactamase superfamily. Glyoxalase II family. Homodimer. Requires Zn(2+) as cofactor.

Its subcellular location is the cytoplasm. The protein resides in the cytosol. It is found in the nucleus. It catalyses the reaction a ribonucleotidyl-ribonucleotide-RNA + H2O = a 3'-end ribonucleotide-RNA + a 5'-end 5'-phospho-ribonucleoside-RNA + H(+). Functionally, endoribonuclease that catalyzes the hydrolysis of histone-coding pre-mRNA 3'-end. Involved in histone pre-mRNA processing during the S-phase of the cell cycle, which is required for entering/progressing through S-phase. Cleaves histone pre-mRNA at a major and a minor cleavage site after the 5'-ACCCA-3' and the 5'-ACCCACA-3' sequence, respectively, and located downstream of the stem-loop. May require the presence of the HDE element located at the histone pre-RNA 3'-end to avoid non-specific cleavage. The sequence is that of Metallo-beta-lactamase domain-containing protein 1 (mblac1) from Xenopus laevis (African clawed frog).